A 581-amino-acid chain; its full sequence is Prolactin receptor (581 aa).

Positions 1–24 (MKENVASRAVFILLLFLNASLLNG) are cleaved as a signal peptide. The Extracellular segment spans residues 25–234 (QSPPGKPKII…QIPNDFPVND (210 aa)). Fibronectin type-III domains follow at residues 27–127 (PPGK…IVEP) and 129–229 (PPAN…IPND). A disulfide bridge connects residues C36 and C46. N-linked (GlcNAc...) asparagine glycosylation is present at N59. C75 and C86 are disulfide-bonded. N-linked (GlcNAc...) asparagine glycosylation occurs at N132. Residues D211 and H212 each contribute to the Zn(2+) site. A WSXWS motif motif is present at residues 215–219 (WSEWS). An N-linked (GlcNAc...) asparagine glycan is attached at N233. The helical transmembrane segment at 235–258 (TTVWIFVAVLSAVICLIMVWAVAL) threads the bilayer. The Cytoplasmic segment spans residues 259 to 581 (KGYSMMTCIL…PAKEAPPALP (323 aa)). The Box 1 motif signature appears at 267–275 (ILPPVPGPK). 2 disordered regions span residues 321 to 362 (EDQQ…LFSE) and 462 to 502 (LKPS…QDKT). Over residues 329 to 349 (PSKEHMEQGVKPMHMDPDSDS) the composition is skewed to basic and acidic residues.

The protein belongs to the type I cytokine receptor family. Type 1 subfamily. In terms of assembly, interacts with SMARCA1. Interacts with NEK3 and VAV2 and this interaction is prolactin-dependent.

It localises to the membrane. Functionally, this is a receptor for the anterior pituitary hormone prolactin. The protein is Prolactin receptor (PRLR) of Cervus elaphus (Red deer).